The primary structure comprises 257 residues: Flagellar brake protein YcgR 1 (257 aa).

The span at 1-18 shows a compositional bias: polar residues; that stretch reads MDTTQSNGQTDTQGQLHA. Residues 1–30 form a disordered region; the sequence is MDTTQSNGQTDTQGQLHAQTAEGGNDFGRR. In terms of domain architecture, PilZ spans 133–246; sequence QRREYFRVDA…AENTLQRLIT (114 aa).

The protein belongs to the YcgR family. As to quaternary structure, monomer. Interacts with the flagellar basal bodies.

The protein resides in the bacterial flagellum basal body. In terms of biological role, acts as a flagellar brake, regulating swimming and swarming in a bis-(3'-5') cyclic diguanylic acid (c-di-GMP)-dependent manner. Binds 1 c-di-GMP dimer per subunit. Increasing levels of c-di-GMP lead to decreased motility. In Paraburkholderia phytofirmans (strain DSM 17436 / LMG 22146 / PsJN) (Burkholderia phytofirmans), this protein is Flagellar brake protein YcgR 1.